A 226-amino-acid chain; its full sequence is MYHIELKKEALLPRERLVDLGADRLSNQELLAILLRTGIKEKPVLEISTQILENISSLADFGQLSLQELQSIKGIGQVKSVEIKAMLELAKRIHKAEYDRKEQILSSEQLARKMMLELGDKKQEHLVAIYMDTQNRIIEQRTIFIGTVRRSVAEPREILHYACKNMATSLIIIHNHPSGSPNPSESDLSFTKKIKRSCDHLGIVCLDHIIVGKNKYYSFREEADIL.

One can recognise an MPN domain in the interval 103–225 (QILSSEQLAR…YYSFREEADI (123 aa)). Zn(2+) contacts are provided by histidine 174, histidine 176, and aspartate 187. The JAMM motif motif lies at 174–187 (HNHPSGSPNPSESD).

Belongs to the UPF0758 family.

The sequence is that of UPF0758 protein gbs1168 from Streptococcus agalactiae serotype III (strain NEM316).